Reading from the N-terminus, the 651-residue chain is Acetyl-coenzyme A synthetase (651 aa).

CoA contacts are provided by residues 193 to 196 (RAGR), Thr313, and Asn337. ATP-binding positions include 389 to 391 (GEP), 413 to 418 (DTWWQT), Asp502, and Arg517. Ser525 lines the CoA pocket. Arg528 is a binding site for ATP. Mg(2+) contacts are provided by Val539, His541, and Val544. A CoA-binding site is contributed by Arg586. Lys611 is subject to N6-acetyllysine.

This sequence belongs to the ATP-dependent AMP-binding enzyme family. Requires Mg(2+) as cofactor. Acetylated. Deacetylation by the SIR2-homolog deacetylase activates the enzyme.

The catalysed reaction is acetate + ATP + CoA = acetyl-CoA + AMP + diphosphate. Catalyzes the conversion of acetate into acetyl-CoA (AcCoA), an essential intermediate at the junction of anabolic and catabolic pathways. AcsA undergoes a two-step reaction. In the first half reaction, AcsA combines acetate with ATP to form acetyl-adenylate (AcAMP) intermediate. In the second half reaction, it can then transfer the acetyl group from AcAMP to the sulfhydryl group of CoA, forming the product AcCoA. This is Acetyl-coenzyme A synthetase from Shewanella denitrificans (strain OS217 / ATCC BAA-1090 / DSM 15013).